The chain runs to 216 residues: Redox-sensing transcriptional repressor Rex (216 aa).

The segment at residues 15–54 (KYLRVTQQLIEEGRDAVSSKELGDFTGINPVQVRRDLNAI) is a DNA-binding region (H-T-H motif). 89 to 94 (GAGNLG) is a binding site for NAD(+).

Belongs to the transcriptional regulatory Rex family. As to quaternary structure, homodimer.

The protein localises to the cytoplasm. Its function is as follows. Modulates transcription in response to changes in cellular NADH/NAD(+) redox state. This is Redox-sensing transcriptional repressor Rex from Rubrobacter xylanophilus (strain DSM 9941 / JCM 11954 / NBRC 16129 / PRD-1).